Here is a 298-residue protein sequence, read N- to C-terminus: Tyrosine recombinase XerC (298 aa).

Residues 2 to 88 enclose the Core-binding (CB) domain; the sequence is TDLHTDVERY…ALRSFFDWLV (87 aa). One can recognise a Tyr recombinase domain in the interval 109-288; it reads HLPKNIDVDD…DFQHLASVYD (180 aa). Catalysis depends on residues Arg-148, Lys-172, His-240, Arg-243, and His-266. The O-(3'-phospho-DNA)-tyrosine intermediate role is filled by Tyr-275.

Belongs to the 'phage' integrase family. XerC subfamily. Forms a cyclic heterotetrameric complex composed of two molecules of XerC and two molecules of XerD, in which XerC interacts with XerD via its C-terminal region, XerD interacts with XerC via its C-terminal region and so on.

It is found in the cytoplasm. Its activity is regulated as follows. FtsK may regulate the catalytic switch between XerC and XerD in the heterotetrameric complex during the two steps of the recombination process. In terms of biological role, site-specific tyrosine recombinase, which acts by catalyzing the cutting and rejoining of the recombining DNA molecules. Binds cooperatively to specific DNA consensus sequences that are separated from XerD binding sites by a short central region, forming the heterotetrameric XerC-XerD complex that recombines DNA substrates. The complex is essential to convert dimers of the bacterial chromosome into monomers to permit their segregation at cell division. It also contributes to the segregational stability of plasmids. In the complex XerC specifically exchanges the top DNA strands. This chain is Tyrosine recombinase XerC, found in Escherichia coli O45:K1 (strain S88 / ExPEC).